Consider the following 238-residue polypeptide: Ephrin-A3 (238 aa).

The first 22 residues, 1-22 (MAAAPLLLLLLLVPVPLLPLLA), serve as a signal peptide directing secretion. The 140-residue stretch at 30-169 (GNRHAVYWNS…RMKVFVCCAS (140 aa)) folds into the Ephrin RBD domain. N38, N67, and N100 each carry an N-linked (GlcNAc...) asparagine glycan. Intrachain disulfides connect C63/C110 and C99/C158. G214 is lipidated: GPI-anchor amidated glycine. A propeptide spans 215 to 238 (TSPKREHLPLAVGIAFFLMTFLAS) (removed in mature form).

This sequence belongs to the ephrin family. As to quaternary structure, interacts with EPHA8; activates EPHA8. Expressed in brain, skeletal muscle, spleen, thymus, prostate, testis, ovary, small intestine, and peripheral blood leukocytes.

It is found in the cell membrane. Its function is as follows. Cell surface GPI-bound ligand for Eph receptors, a family of receptor tyrosine kinases which are crucial for migration, repulsion and adhesion during neuronal, vascular and epithelial development. Binds promiscuously Eph receptors residing on adjacent cells, leading to contact-dependent bidirectional signaling into neighboring cells. The signaling pathway downstream of the receptor is referred to as forward signaling while the signaling pathway downstream of the ephrin ligand is referred to as reverse signaling. The polypeptide is Ephrin-A3 (EFNA3) (Homo sapiens (Human)).